An 830-amino-acid polypeptide reads, in one-letter code: Formin-like protein 14 (830 aa).

An N-terminal signal peptide occupies residues 1–34 (MAMAMAMPSSSPPLFFSLLNLMLLLLLLAPYCSA). Residues 40–59 (NNTHHRSSSPTQTTLQQLHS) are compositionally biased toward polar residues. Positions 40–195 (NNTHHRSSSP…NISTLVHPTQ (156 aa)) are disordered. 2 stretches are compositionally biased toward pro residues: residues 61 to 86 (DSPPPPPLPTPTVTTPTPPPPPPAPR) and 95 to 135 (PPPP…PTPK). Residues 149–160 (YPFTNYPFFPNF) show a composition bias toward low complexity. A helical transmembrane segment spans residues 203 to 223 (VLQALLLSFLSLCLLLLSALL). Residues 235–446 (HHSHSHPNAR…LHSDKLKPGS (212 aa)) are disordered. The segment covering 314–323 (RPLPPLPRVG) has biased composition (pro residues). Over residues 324-369 (PPSGEFASRSSASDPSTAPPAAAEASSSSLSPSSPSASSPTLGSSP) the composition is skewed to low complexity. Residues 390-823 (PKRRPQPPEP…MMGRDWNMAA (434 aa)) form the FH2 domain. Basic and acidic residues predominate over residues 424-446 (HSPSEKSMRKSRPLHSDKLKPGS).

Belongs to the formin-like family. Class-I subfamily.

It is found in the membrane. The sequence is that of Formin-like protein 14 (FH14) from Oryza sativa subsp. japonica (Rice).